We begin with the raw amino-acid sequence, 299 residues long: HTH-type transcriptional regulator CysL (299 aa).

Residues 1–58 (MYYDVLKTFIAVVEEKNFTKAAEKLMISQPSVSLHIKNLEKEFQTALLNRSPKHFTTT) enclose the HTH lysR-type domain. Residues 18-37 (FTKAAEKLMISQPSVSLHIK) constitute a DNA-binding region (H-T-H motif).

Belongs to the LysR transcriptional regulatory family.

In terms of biological role, transcriptional activator of the cysJI operon which is involved in sulfur assimilation. Also negatively regulates its own transcription. The chain is HTH-type transcriptional regulator CysL (cysL) from Bacillus subtilis (strain 168).